Here is an 89-residue protein sequence, read N- to C-terminus: Large ribosomal subunit protein bL27 (89 aa).

The segment at 1 to 20 (MAHKKAGGSSRNGRDSESKR) is disordered.

Belongs to the bacterial ribosomal protein bL27 family.

This Bartonella bacilliformis (strain ATCC 35685 / KC583 / Herrer 020/F12,63) protein is Large ribosomal subunit protein bL27.